Reading from the N-terminus, the 536-residue chain is Inactive beta-amylase 9 (536 aa).

Position 47 is a phosphoserine (serine 47). Residues 511–536 form a disordered region; it reads QASEAEVEAETASIGSGTGAPSLQTA.

The protein belongs to the glycosyl hydrolase 14 family. In terms of tissue distribution, mostly expressed in young floral buds, flowers and roots, and, to a later extent, in stems and leaves.

The protein localises to the cytoplasm. This chain is Inactive beta-amylase 9 (BAM9), found in Arabidopsis thaliana (Mouse-ear cress).